Consider the following 179-residue polypeptide: Protein HEADING DATE 3A (179 aa).

The protein belongs to the phosphatidylethanolamine-binding protein family. In terms of tissue distribution, expressed in the inner region of the SAM, stem and leaf blade vascular tissues (at protein level).

It is found in the cytoplasm. It localises to the nucleus. Its function is as follows. Probable mobile flower-promoting signal (florigen) that moves from the leaf to the shoot apical meristem (SAM) and induces flowering. Promotes the transition from vegetative growth to flowering downstream of HD1 and EHD1 under short day (SD) conditions. Acts upstream of MADS14 and MADS15. This is Protein HEADING DATE 3A (HD3A) from Oryza sativa subsp. japonica (Rice).